A 103-amino-acid polypeptide reads, in one-letter code: UPF0145 protein BCE_1095 (103 aa).

It belongs to the UPF0145 family.

In Bacillus cereus (strain ATCC 10987 / NRS 248), this protein is UPF0145 protein BCE_1095.